Consider the following 155-residue polypeptide: Small ribosomal subunit protein uS7 (155 aa).

The protein belongs to the universal ribosomal protein uS7 family. As to quaternary structure, part of the 30S ribosomal subunit. Contacts proteins S9 and S11.

Functionally, one of the primary rRNA binding proteins, it binds directly to 16S rRNA where it nucleates assembly of the head domain of the 30S subunit. Is located at the subunit interface close to the decoding center, probably blocks exit of the E-site tRNA. This chain is Small ribosomal subunit protein uS7, found in Malacoplasma penetrans (strain HF-2) (Mycoplasma penetrans).